The following is a 244-amino-acid chain: uncharacterized protein (244 aa).

The protein belongs to the MtxX family.

This is an uncharacterized protein from Methanocaldococcus jannaschii (strain ATCC 43067 / DSM 2661 / JAL-1 / JCM 10045 / NBRC 100440) (Methanococcus jannaschii).